Reading from the N-terminus, the 232-residue chain is Octanoyltransferase (232 aa).

Residues 40–226 (GSAPERVWLL…TWQDLFGSVP (187 aa)) form the BPL/LPL catalytic domain. Substrate contacts are provided by residues 79-86 (RGGQWTYH), 157-159 (ALG), and 170-172 (GVA). The active-site Acyl-thioester intermediate is cysteine 188.

Belongs to the LipB family.

The protein resides in the cytoplasm. It carries out the reaction octanoyl-[ACP] + L-lysyl-[protein] = N(6)-octanoyl-L-lysyl-[protein] + holo-[ACP] + H(+). It functions in the pathway protein modification; protein lipoylation via endogenous pathway; protein N(6)-(lipoyl)lysine from octanoyl-[acyl-carrier-protein]: step 1/2. Its function is as follows. Catalyzes the transfer of endogenously produced octanoic acid from octanoyl-acyl-carrier-protein onto the lipoyl domains of lipoate-dependent enzymes. Lipoyl-ACP can also act as a substrate although octanoyl-ACP is likely to be the physiological substrate. This is Octanoyltransferase from Gluconacetobacter diazotrophicus (strain ATCC 49037 / DSM 5601 / CCUG 37298 / CIP 103539 / LMG 7603 / PAl5).